The following is a 623-amino-acid chain: uncharacterized protein (623 aa).

Residues 24–51 (RALVQKDELAQASQDVEDMRDCYDSLLN) are a coiled coil. Disordered stretches follow at residues 148 to 170 (TRQR…QQLQ), 240 to 343 (FSGL…TTPP), 362 to 393 (ALPT…TKAI), 454 to 531 (SFSG…LGYS), and 585 to 607 (KKLG…PQAL). A compositionally biased stretch (acidic residues) spans 243–259 (LEDDDGDDEIENNENDG). The span at 328–343 (VSQSAPLFPENRTTPP) shows a compositional bias: polar residues. The segment covering 364-379 (PTPVETTRSPSSTTSP) has biased composition (low complexity). Polar residues predominate over residues 384 to 393 (VGSSNPTKAI). Positions 484 to 495 (PVSKLPKVSSSP) are enriched in low complexity. Over residues 496-506 (TASPTFVSTPK) the composition is skewed to polar residues. Pro residues predominate over residues 590 to 606 (PSPPLTPMSLIHPPPQA).

This is an uncharacterized protein from Arabidopsis thaliana (Mouse-ear cress).